The following is a 235-amino-acid chain: Cell division protein FtsQ (235 aa).

Residues 1–6 are Cytoplasmic-facing; it reads MERLTR. The helical transmembrane segment at 7–25 threads the bilayer; the sequence is WLLVMMAMLLAASGLVWFY. Residues 26-235 are Periplasmic-facing; sequence NSNHLPVKQV…DGLPEKESEE (210 aa). Positions 30–99 constitute a POTRA domain; it reads LPVKQVSLKG…DTVEVVLTER (70 aa).

Belongs to the FtsQ/DivIB family. FtsQ subfamily. Part of a complex composed of FtsB, FtsL and FtsQ.

It localises to the cell inner membrane. Functionally, essential cell division protein. May link together the upstream cell division proteins, which are predominantly cytoplasmic, with the downstream cell division proteins, which are predominantly periplasmic. May control correct divisome assembly. The chain is Cell division protein FtsQ from Neisseria meningitidis serogroup B (strain ATCC BAA-335 / MC58).